Here is a 402-residue protein sequence, read N- to C-terminus: 1-deoxy-D-xylulose 5-phosphate reductoisomerase (402 aa).

NADPH-binding residues include T10, G11, S12, I13, N38, and N124. K125 is a 1-deoxy-D-xylulose 5-phosphate binding site. E126 contacts NADPH. D150 provides a ligand contact to Mn(2+). 1-deoxy-D-xylulose 5-phosphate is bound by residues S151, E152, S186, and H209. E152 lines the Mn(2+) pocket. Position 215 (G215) interacts with NADPH. 1-deoxy-D-xylulose 5-phosphate contacts are provided by S222, N227, K228, and E231. E231 contributes to the Mn(2+) binding site.

This sequence belongs to the DXR family. Requires Mg(2+) as cofactor. The cofactor is Mn(2+).

It catalyses the reaction 2-C-methyl-D-erythritol 4-phosphate + NADP(+) = 1-deoxy-D-xylulose 5-phosphate + NADPH + H(+). It participates in isoprenoid biosynthesis; isopentenyl diphosphate biosynthesis via DXP pathway; isopentenyl diphosphate from 1-deoxy-D-xylulose 5-phosphate: step 1/6. In terms of biological role, catalyzes the NADPH-dependent rearrangement and reduction of 1-deoxy-D-xylulose-5-phosphate (DXP) to 2-C-methyl-D-erythritol 4-phosphate (MEP). This Vibrio vulnificus (strain CMCP6) protein is 1-deoxy-D-xylulose 5-phosphate reductoisomerase.